Reading from the N-terminus, the 663-residue chain is (R)-specific secondary-alkylsulfatase (663 aa).

An N-terminal signal peptide occupies residues 1–28 (MSRFIRASQRRTLLATLIAATLAQPLLA). Residues H179, H181, D183, and H184 each contribute to the Zn(2+) site. Q232 is a sulfate binding site. Residues E291 and D310 each coordinate Zn(2+). Residues 318-323 (NLLTPR) and R328 contribute to the sulfate site. A Zn(2+)-binding site is contributed by H355. Y417 provides a ligand contact to sulfate.

Belongs to the metallo-beta-lactamase superfamily. Type III sulfatase family. In terms of assembly, homodimer.

The enzyme catalyses an (R)-secondary-alkyl sulfate + H2O = an (S)-secondary-alcohol + sulfate.. In terms of biological role, alkylsulfatase that catalyzes the enantioselective hydrolysis of secondary-alkylsulfates with strict inversion of configuration, leading to the formation of homochiral (S)-configurated alcohols and nonreacted sulfate esters. The substrate spectrum includes a range of linear, branched or cyclic sec-alkylsulfates. Can use sec-alkylsulfate esters bearing aromatic, olefinic and acetylenic moieties. Acts by cleaving the C-O bond, resulting in inversion at the carbon. This is (R)-specific secondary-alkylsulfatase from Pseudomonas sp.